The sequence spans 177 residues: 2-C-methyl-D-erythritol 2,4-cyclodiphosphate synthase (177 aa).

A divalent metal cation is bound by residues aspartate 8 and histidine 10. Residues 8-10 and 34-35 each bind 4-CDP-2-C-methyl-D-erythritol 2-phosphate; these read DVH and HS. Histidine 42 provides a ligand contact to a divalent metal cation. 4-CDP-2-C-methyl-D-erythritol 2-phosphate-binding positions include 56–58, 61–65, 132–135, phenylalanine 139, and arginine 142; these read DIG, FPDTD, and TTEE.

Belongs to the IspF family. In terms of assembly, homotrimer. A divalent metal cation is required as a cofactor.

It catalyses the reaction 4-CDP-2-C-methyl-D-erythritol 2-phosphate = 2-C-methyl-D-erythritol 2,4-cyclic diphosphate + CMP. It functions in the pathway isoprenoid biosynthesis; isopentenyl diphosphate biosynthesis via DXP pathway; isopentenyl diphosphate from 1-deoxy-D-xylulose 5-phosphate: step 4/6. Its function is as follows. Involved in the biosynthesis of isopentenyl diphosphate (IPP) and dimethylallyl diphosphate (DMAPP), two major building blocks of isoprenoid compounds. Catalyzes the conversion of 4-diphosphocytidyl-2-C-methyl-D-erythritol 2-phosphate (CDP-ME2P) to 2-C-methyl-D-erythritol 2,4-cyclodiphosphate (ME-CPP) with a corresponding release of cytidine 5-monophosphate (CMP). The sequence is that of 2-C-methyl-D-erythritol 2,4-cyclodiphosphate synthase from Agathobacter rectalis (strain ATCC 33656 / DSM 3377 / JCM 17463 / KCTC 5835 / VPI 0990) (Eubacterium rectale).